A 554-amino-acid polypeptide reads, in one-letter code: Hydroxylamine reductase (554 aa).

[2Fe-2S] cluster is bound by residues Cys3, Cys6, Cys18, and Cys25. His252, Glu276, Cys320, Cys408, Cys436, Cys461, Glu495, and Lys497 together coordinate hybrid [4Fe-2O-2S] cluster. Residue Cys408 is modified to Cysteine persulfide.

This sequence belongs to the HCP family. Requires [2Fe-2S] cluster as cofactor. Hybrid [4Fe-2O-2S] cluster is required as a cofactor.

It localises to the cytoplasm. It carries out the reaction A + NH4(+) + H2O = hydroxylamine + AH2 + H(+). In terms of biological role, catalyzes the reduction of hydroxylamine to form NH(3) and H(2)O. This Shewanella oneidensis (strain ATCC 700550 / JCM 31522 / CIP 106686 / LMG 19005 / NCIMB 14063 / MR-1) protein is Hydroxylamine reductase.